A 457-amino-acid polypeptide reads, in one-letter code: Amidophosphoribosyltransferase (457 aa).

Catalysis depends on cysteine 2, which acts as the Nucleophile. The 222-residue stretch at 2–223 (CGVVGIYHPD…PGKAAIIKDG (222 aa)) folds into the Glutamine amidotransferase type-2 domain. Cysteine 239 contacts [4Fe-4S] cluster. 3 residues coordinate Mg(2+): serine 286, aspartate 348, and aspartate 349. The [4Fe-4S] cluster site is built by cysteine 385, cysteine 438, and cysteine 441.

It in the C-terminal section; belongs to the purine/pyrimidine phosphoribosyltransferase family. The cofactor is Mg(2+). Requires [4Fe-4S] cluster as cofactor.

The catalysed reaction is 5-phospho-beta-D-ribosylamine + L-glutamate + diphosphate = 5-phospho-alpha-D-ribose 1-diphosphate + L-glutamine + H2O. The protein operates within purine metabolism; IMP biosynthesis via de novo pathway; N(1)-(5-phospho-D-ribosyl)glycinamide from 5-phospho-alpha-D-ribose 1-diphosphate: step 1/2. Functionally, catalyzes the formation of phosphoribosylamine from phosphoribosylpyrophosphate (PRPP) and glutamine. This Archaeoglobus fulgidus (strain ATCC 49558 / DSM 4304 / JCM 9628 / NBRC 100126 / VC-16) protein is Amidophosphoribosyltransferase.